The following is a 121-amino-acid chain: Large ribosomal subunit protein bL31 (121 aa).

The segment at 1–97 (MKEGIHPDYK…AKENRAAKRA (97 aa)) is large ribosomal subunit protein bL31. Zn(2+)-binding residues include cysteine 16, cysteine 18, cysteine 36, and cysteine 39. A compositionally biased stretch (low complexity) spans 65 to 80 (ATPAKAEPAKKAPAAE). Residues 65 to 121 (ATPAKAEPAKKAPAAEPAKKVEAAKENRAAKRAKAGKSKKSEAAPAAEAPAADAKPE) form a disordered region. The segment at 74 to 121 (KKAPAAEPAKKVEAAKENRAAKRAKAGKSKKSEAAPAAEAPAADAKPE) is unknown. Over residues 81–93 (PAKKVEAAKENRA) the composition is skewed to basic and acidic residues. Over residues 107–121 (AAPAAEAPAADAKPE) the composition is skewed to low complexity.

It belongs to the bacterial ribosomal protein bL31 family. Type A subfamily. Part of the 50S ribosomal subunit. Zn(2+) serves as cofactor.

Functionally, binds the 23S rRNA. This Anaeromyxobacter dehalogenans (strain 2CP-C) protein is Large ribosomal subunit protein bL31.